Consider the following 520-residue polypeptide: GMP synthase [glutamine-hydrolyzing] (520 aa).

Residues 8–202 (RLLIIDFGSQ…FVRLAGFSGD (195 aa)) form the Glutamine amidotransferase type-1 domain. Cys86 serves as the catalytic Nucleophile. Catalysis depends on residues His177 and Glu179. The GMPS ATP-PPase domain maps to 203–395 (WTMGAYREQM…LGLPDSFIGR (193 aa)). 230–236 (SGGVDSS) is a binding site for ATP.

Homodimer.

The catalysed reaction is XMP + L-glutamine + ATP + H2O = GMP + L-glutamate + AMP + diphosphate + 2 H(+). It functions in the pathway purine metabolism; GMP biosynthesis; GMP from XMP (L-Gln route): step 1/1. Functionally, catalyzes the synthesis of GMP from XMP. This is GMP synthase [glutamine-hydrolyzing] from Ruegeria sp. (strain TM1040) (Silicibacter sp.).